A 263-amino-acid chain; its full sequence is GTP cyclohydrolase 1 type 2 homolog (263 aa).

A divalent metal cation contacts are provided by His-76, His-77, Asp-113, His-231, and Glu-235.

This sequence belongs to the GTP cyclohydrolase I type 2/NIF3 family. In terms of assembly, homohexamer.

The polypeptide is GTP cyclohydrolase 1 type 2 homolog (Deinococcus radiodurans (strain ATCC 13939 / DSM 20539 / JCM 16871 / CCUG 27074 / LMG 4051 / NBRC 15346 / NCIMB 9279 / VKM B-1422 / R1)).